We begin with the raw amino-acid sequence, 1004 residues long: Caspase recruitment domain-containing protein 14 (1004 aa).

One can recognise a CARD domain in the interval 15 to 107 (DEETLWEMME…DVYTLVTGLQ (93 aa)). Positions 128-409 (LAGAIGSLQE…RTQLRQLQAE (282 aa)) form a coiled coil. Positions 409–568 (EPPGVLKQEA…RRPARRILSQ (160 aa)) are maintains the protein in an inactive state. The residue at position 544 (serine 544) is a Phosphoserine. Residues 568–658 (QVTMLAFQGD…FCCLSVKVNT (91 aa)) form the PDZ domain. The Guanylate kinase-like domain occupies 807 to 990 (AESCLTLVPY…LLSCVRQAIA (184 aa)).

Interacts (via CARD domain) with BCL10 (via CARD domain). Forms a complex with MALT1 and BCL10; resulting in the formation of a CBM (CARD14-BLC10-MALT1) complex. Interacts with TRAF2, TRAF3 and TRAF6. In terms of tissue distribution, isoform 1 is detected in placenta and epidermal keratinocytes. Isoform 2 is detected in leukocytes and fetal brain.

Its subcellular location is the cytoplasm. In terms of biological role, acts as a scaffolding protein that can activate the inflammatory transcription factor NF-kappa-B and p38/JNK MAP kinase signaling pathways. Forms a signaling complex with BCL10 and MALT1, and activates MALT1 proteolytic activity and inflammatory gene expression. MALT1 is indispensable for CARD14-induced activation of NF-kappa-B and p38/JNK MAP kinases. May play a role in signaling mediated by TRAF2, TRAF3 and TRAF6 and protects cells against apoptosis. Its function is as follows. Not able to activate the inflammatory transcription factor NF-kappa-B and may function as a dominant negative regulator. In Homo sapiens (Human), this protein is Caspase recruitment domain-containing protein 14 (CARD14).